Reading from the N-terminus, the 1013-residue chain is Receptor-type tyrosine-protein phosphatase N2 (1013 aa).

An N-terminal signal peptide occupies residues methionine 1–proline 19. The segment at methionine 1 to leucine 419 is involved in localization to secretory granules; interaction with CPE. The Extracellular portion of the chain corresponds to alanine 20 to phenylalanine 613. Disordered regions lie at residues arginine 116–tyrosine 137, methionine 273–glycine 302, aspartate 342–aspartate 382, and leucine 401–alanine 487. Basic and acidic residues predominate over residues leucine 419–glutamate 430. 2 positions are modified to phosphoserine: serine 434 and serine 435. Asparagine 562 carries N-linked (GlcNAc...) asparagine glycosylation. A helical membrane pass occupies residues isoleucine 614 to isoleucine 634. Residues tyrosine 635–glutamine 1013 lie on the Cytoplasmic side of the membrane. The short motif at tyrosine 664–alanine 673 is the Tyrosine-based internalization motif element. A disordered region spans residues alanine 673–valine 717. A compositionally biased stretch (polar residues) spans serine 686–serine 696. Serine 690 and serine 696 each carry phosphoserine. Positions proline 703–valine 717 are enriched in low complexity. Residues leucine 743–glutamate 1003 form the Tyrosine-protein phosphatase domain. Substrate is bound by residues aspartate 911 and cysteine 943–arginine 949. The active-site Phosphocysteine intermediate is cysteine 943. The residue at position 968 (lysine 968) is an N6-acetyllysine. Glutamine 988 contacts substrate. The Leucine-based sorting signal signature appears at glutamate 1002 to leucine 1008.

This sequence belongs to the protein-tyrosine phosphatase family. Receptor class 8 subfamily. As to quaternary structure, self-associates. Interacts (via cytoplasmic domain) with PTPRN (via cytoplasmic domain). Interacts (precursor form) with CPE. Interacts with HAP1. Interacts with AP2A1 or AP2A2 and AP1G1; indicative for an association with adaptor protein complex 2 (AP-2) and adaptor protein complex 1 (AP-1). Interacts with AP2M1; indicative for an association with adaptor protein complex 2 (AP-2). Interacts with MYO5A. In terms of processing, subject to proteolytic cleavage at multiple sites. In terms of tissue distribution, detected in pancreatic islets and adrenal medulla.

It localises to the cytoplasmic vesicle. The protein resides in the secretory vesicle membrane. Its subcellular location is the secretory vesicle. It is found in the synaptic vesicle membrane. It carries out the reaction O-phospho-L-tyrosyl-[protein] + H2O = L-tyrosyl-[protein] + phosphate. Plays a role in vesicle-mediated secretory processes. Required for normal accumulation of secretory vesicles in hippocampus, pituitary and pancreatic islets. Required for the accumulation of normal levels of insulin-containing vesicles and preventing their degradation. Plays a role in insulin secretion in response to glucose stimuli. Required for normal accumulation of the neurotransmitters norepinephrine, dopamine and serotonin in the brain. In females, but not in males, required for normal accumulation and secretion of pituitary hormones, such as luteinizing hormone (LH) and follicle-stimulating hormone (FSH). Required to maintain normal levels of renin expression and renin release. May regulate catalytic active protein-tyrosine phosphatases such as PTPRA through dimerization. Has phosphatidylinositol phosphatase activity; the PIPase activity is involved in its ability to regulate insulin secretion. Can dephosphorylate phosphatidylinositol 4,5-biphosphate, phosphatidylinositol 5-phosphate and phosphatidylinositol 3-phosphate. Regulates PI(4,5)P2 level in the plasma membrane and localization of cofilin at the plasma membrane and thus is indirectly involved in regulation of actin dynamics related to cell migration and metastasis; upon hydrolysis of PI(4,5)P2 cofilin is released from the plasma membrane and acts in the cytoplasm in severing F-actin filaments. This chain is Receptor-type tyrosine-protein phosphatase N2 (PTPRN2), found in Macaca nemestrina (Pig-tailed macaque).